The chain runs to 136 residues: ATP synthase epsilon chain 2 (136 aa).

The protein belongs to the ATPase epsilon chain family. As to quaternary structure, F-type ATPases have 2 components, CF(1) - the catalytic core - and CF(0) - the membrane proton channel. CF(1) has five subunits: alpha(3), beta(3), gamma(1), delta(1), epsilon(1). CF(0) has three main subunits: a, b and c.

The protein resides in the cell inner membrane. Its function is as follows. Produces ATP from ADP in the presence of a proton gradient across the membrane. In Nitrobacter hamburgensis (strain DSM 10229 / NCIMB 13809 / X14), this protein is ATP synthase epsilon chain 2.